A 129-amino-acid chain; its full sequence is KVFERCELARTLKKLGLDDYKGVSLANWLCLTKWESGYNTKATNYNPGSESTDYGIFQINSKFWCNDGKTPDAVDGCHVSCSELMENDIEKAVACAKHIVSEQGITAWVAWKSHCRDHDVSSYVEGCTL.

A C-type lysozyme domain is found at 1-129; sequence KVFERCELAR…VSSYVEGCTL (129 aa). 4 disulfides stabilise this stretch: cysteine 6–cysteine 127, cysteine 30–cysteine 115, cysteine 65–cysteine 81, and cysteine 77–cysteine 95. Residues glutamate 35 and aspartate 53 contribute to the active site.

This sequence belongs to the glycosyl hydrolase 22 family. In terms of assembly, monomer.

The catalysed reaction is Hydrolysis of (1-&gt;4)-beta-linkages between N-acetylmuramic acid and N-acetyl-D-glucosamine residues in a peptidoglycan and between N-acetyl-D-glucosamine residues in chitodextrins.. In terms of biological role, lysozymes have primarily a bacteriolytic function; those in tissues and body fluids are associated with the monocyte-macrophage system and enhance the activity of immunoagents. In Capra hircus (Goat), this protein is Lysozyme C-1.